Reading from the N-terminus, the 246-residue chain is Small ribosomal subunit protein uS2 (246 aa).

The protein belongs to the universal ribosomal protein uS2 family.

The polypeptide is Small ribosomal subunit protein uS2 (Lachnoclostridium phytofermentans (strain ATCC 700394 / DSM 18823 / ISDg) (Clostridium phytofermentans)).